The following is a 629-amino-acid chain: DNA-directed RNA polymerase III subunit rpc3 (629 aa).

3 disordered regions span residues 136 to 164, 247 to 294, and 373 to 420; these read ANGV…SNEQ, PRGA…EMGY, and QLDL…SGGN. Residues 257–268 are compositionally biased toward basic and acidic residues; it reads RRADEPNKKCRT. Acidic residues predominate over residues 272–293; the sequence is SVDENDEHDEEEENEWSDDEMG. Residues 374 to 388 show a composition bias toward polar residues; sequence LDLSSSTGPMDSSQP. Positions 389–409 are enriched in basic and acidic residues; the sequence is DGRRGKRPWDGDVEGTNHEEA. Positions 556 to 577 are leucine-zipper; sequence TYKAMSRCLQRLRFERSRIKDF.

The protein belongs to the RNA polymerase beta chain family. Component of the RNA polymerase III (Pol III) complex consisting of 17 subunits.

The protein localises to the nucleus. Its function is as follows. DNA-dependent RNA polymerase catalyzes the transcription of DNA into RNA using the four ribonucleoside triphosphates as substrates. Specific core component of RNA polymerase III which synthesizes small RNAs, such as 5S rRNA and tRNAs. This Aspergillus fumigatus (strain ATCC MYA-4609 / CBS 101355 / FGSC A1100 / Af293) (Neosartorya fumigata) protein is DNA-directed RNA polymerase III subunit rpc3 (rpc82).